Here is a 491-residue protein sequence, read N- to C-terminus: UDP-N-acetylmuramate--L-alanine ligase (491 aa).

126–132 contributes to the ATP binding site; that stretch reads GTHGKTT.

It belongs to the MurCDEF family.

The protein resides in the cytoplasm. The enzyme catalyses UDP-N-acetyl-alpha-D-muramate + L-alanine + ATP = UDP-N-acetyl-alpha-D-muramoyl-L-alanine + ADP + phosphate + H(+). The protein operates within cell wall biogenesis; peptidoglycan biosynthesis. In terms of biological role, cell wall formation. This is UDP-N-acetylmuramate--L-alanine ligase from Salmonella paratyphi A (strain ATCC 9150 / SARB42).